An 835-amino-acid polypeptide reads, in one-letter code: Leucine--tRNA ligase (835 aa).

A 'HIGH' region motif is present at residues 36-46 (PYPSGKIHVGH). A 'KMSKS' region motif is present at residues 602 to 606 (KMSKS). Residue Lys605 coordinates ATP.

This sequence belongs to the class-I aminoacyl-tRNA synthetase family.

It localises to the cytoplasm. It carries out the reaction tRNA(Leu) + L-leucine + ATP = L-leucyl-tRNA(Leu) + AMP + diphosphate. This is Leucine--tRNA ligase from Rickettsia africae (strain ESF-5).